A 200-amino-acid chain; its full sequence is Small ribosomal subunit protein mS26 (200 aa).

Residues 1-27 (MLRALNRLAARPGGQPPTLLLLPVRGR) constitute a mitochondrion transit peptide. An N6-acetyllysine modification is found at Lys159.

This sequence belongs to the mitochondrion-specific ribosomal protein mS26 family. In terms of assembly, component of the mitochondrial ribosome small subunit (28S) which comprises a 12S rRNA and about 30 distinct proteins.

The protein resides in the mitochondrion. In Rattus norvegicus (Rat), this protein is Small ribosomal subunit protein mS26 (Mrps26).